The following is a 114-amino-acid chain: Large ribosomal subunit protein bL19 (114 aa).

It belongs to the bacterial ribosomal protein bL19 family.

In terms of biological role, this protein is located at the 30S-50S ribosomal subunit interface and may play a role in the structure and function of the aminoacyl-tRNA binding site. The protein is Large ribosomal subunit protein bL19 of Bacillus cereus (strain AH187).